A 326-amino-acid chain; its full sequence is UPF0324 membrane protein PBPRB0970 (326 aa).

The next 10 helical transmembrane spans lie at 27 to 49, 70 to 89, 94 to 116, 123 to 145, 155 to 177, 184 to 206, 216 to 235, 242 to 261, 271 to 290, and 303 to 325; these read FFIIALLCLLPIISSPVALILGF, LLAYSIIGLGFGIHLDQAIA, GFGLIVGSIFFTLIFGWFLTKAL, GHLIASGTAICGGSAIAAVAPAI, ALATVFVLNSIALFIFPAIGHLL, FGTWAAIAIHDTSSVVGAAGAYG, IKLARALWIVPIAFLSALLF, IGIPYFILFYCLAIVFAHFV, IFVASKRLLVVCLFLIGSGI, and LLLGVLLWVAIGVGSLSYILLNV.

It belongs to the UPF0324 family.

It localises to the cell membrane. The sequence is that of UPF0324 membrane protein PBPRB0970 from Photobacterium profundum (strain SS9).